The primary structure comprises 752 residues: Microtubule-associated protein tau (752 aa).

The tract at residues 1-567 is disordered; the sequence is MAEPRQEFDT…PVPMPDLKNV (567 aa). N-acetylalanine is present on alanine 2. Tyrosine 18 is subject to Phosphotyrosine. Lysine 33 participates in a covalent cross-link: Glycyl lysine isopeptide (Lys-Gly) (interchain with G-Cter in ubiquitin). Phosphoserine is present on residues serine 35 and serine 50. The segment covering 50–60 has biased composition (polar residues); the sequence is SETSDAKSTPT. Phosphothreonine is present on residues threonine 58, threonine 60, and threonine 100. The segment covering 142–151 has biased composition (polar residues); that stretch reads SDWTHQQVPS. A compositionally biased stretch (basic and acidic residues) spans 173–182; sequence RPEDVERSHP. Phosphoserine occurs at positions 191 and 204. Residues 192–204 show a composition bias toward basic and acidic residues; it reads PQKEAWGKDRLGS. Residues 205–218 are compositionally biased toward acidic residues; that stretch reads EEEVDEDITMDESS. Residues 219–229 show a composition bias toward low complexity; it reads QESPPSQASLA. Polar residues predominate over residues 233-252; that stretch reads ATPQARSVSASGVSGETTSI. Basic and acidic residues-rich tracts occupy residues 289 to 313 and 374 to 385; these read EEGH…KEQD and SKDRTGNDEKKA. 2 stretches are compositionally biased toward polar residues: residues 387-400 and 432-446; these read TSTP…SNRP and KYVS…SPGT. Threonine 464 carries the post-translational modification Phosphothreonine. Residue arginine 466 is modified to Omega-N-methylarginine. N6,N6-dimethyllysine; alternate is present on lysine 474. Lysine 474 carries the post-translational modification N6-acetyllysine; alternate. Phosphothreonine occurs at positions 480, 486, and 487. Serine 489 bears the Phosphoserine mark. The residue at position 492 (threonine 492) is a Phosphothreonine. Residues serine 496, serine 502, and serine 506 each carry the phosphoserine modification. The segment covering 498 to 525 has biased composition (low complexity); the sequence is EPPKSGERSGYSSPGSPGTPGSRSRTPS. The residue at position 508 (tyrosine 508) is a Phosphotyrosine. A phosphoserine mark is found at serine 509 and serine 510. A Phosphoserine; by CK1, PDPK1 and TTBK1 modification is found at serine 513. A phosphothreonine mark is found at threonine 516 and threonine 523. Position 525 is a phosphoserine (serine 525). Threonine 528 is modified (phosphothreonine). At lysine 536 the chain carries N6-acetyllysine. Threonine 542 carries the phosphothreonine modification. 2 positions are modified to phosphoserine: serine 546 and serine 548. Tau/MAP repeat units follow at residues 555-585, 586-616, 617-647, and 648-679; these read QTAP…GGGK, VQII…GGGS, VHIV…GGGQ, and VEVK…GGGN. A Glycyl lysine isopeptide (Lys-Gly) (interchain with G-Cter in ubiquitin) cross-link involves residue lysine 565. Lysine 570 carries the N6-acetyllysine; alternate modification. Lysine 570 carries the N6-methyllysine; alternate modification. Lysine 570 participates in a covalent cross-link: Glycyl lysine isopeptide (Lys-Gly) (interchain with G-Cter in ubiquitin); alternate. Position 573 is a phosphoserine (serine 573). A Glycyl lysine isopeptide (Lys-Gly) (interchain with G-Cter in ubiquitin) cross-link involves residue lysine 578. Lysine 592 is subject to N6-acetyllysine; alternate. A Glycyl lysine isopeptide (Lys-Gly) (interchain with G-Cter in ubiquitin); alternate cross-link involves residue lysine 592. Serine 596 and serine 600 each carry phosphoserine. Position 601 is an N6-acetyllysine (lysine 601). An intrachain disulfide couples cysteine 602 to cysteine 633. A Phosphoserine modification is found at serine 604. Lysine 609 is modified (N6-acetyllysine; alternate). Lysine 609 is covalently cross-linked (Glycyl lysine isopeptide (Lys-Gly) (interchain with G-Cter in ubiquitin); alternate). A Phosphoserine modification is found at serine 616. Lysine 622 is modified (N6,N6-dimethyllysine; alternate). Residues lysine 622, lysine 628, and lysine 632 each carry the N6-acetyllysine; alternate modification. Glycyl lysine isopeptide (Lys-Gly) (interchain with G-Cter in ubiquitin); alternate cross-links involve residues lysine 622, lysine 628, and lysine 632. A Phosphoserine modification is found at serine 635. N6-acetyllysine; alternate is present on residues lysine 642, lysine 654, and lysine 658. Residues lysine 642, lysine 654, and lysine 658 each participate in a glycyl lysine isopeptide (Lys-Gly) (interchain with G-Cter in ubiquitin); alternate cross-link. At arginine 660 the chain carries Omega-N-methylarginine. Serine 663 bears the Phosphoserine mark. A Glycyl lysine isopeptide (Lys-Gly) (interchain with G-Cter in ubiquitin) cross-link involves residue lysine 664. Serine 667 bears the Phosphoserine mark. Lysine 680 bears the N6-acetyllysine; alternate mark. Lysine 680 participates in a covalent cross-link: Glycyl lysine isopeptide (Lys-Gly) (interchain with G-Cter in ubiquitin); alternate. Lysine 686 participates in a covalent cross-link: Glycyl lysine isopeptide (Lys-Gly) (interchain with G-Cter in ubiquitin). Lysine 696 is subject to N6-acetyllysine; alternate. A Glycyl lysine isopeptide (Lys-Gly) (interchain with G-Cter in ubiquitin); alternate cross-link involves residue lysine 696. A Phosphotyrosine modification is found at tyrosine 705. Serine 707 carries the phosphoserine; by CK1 and PDPK1 modification. Serine 711 is subject to Phosphoserine. Position 714 is a phosphothreonine (threonine 714). Serine 715 is subject to Phosphoserine; by CK1 and PDPK1. Phosphoserine is present on residues serine 720, serine 727, and serine 733. Position 738 is a phosphothreonine (threonine 738).

In terms of assembly, interacts with MARK1, MARK2, MARK3 and MARK4. Interacts with SQSTM1 when polyubiquitinated. Interacts with PSMC2 through SQSTM1. Interacts with FKBP4. Binds to CSNK1D. Interacts with SGK1. Interacts with EPM2A; the interaction dephosphorylates MAPT at Ser-388. Interacts with PIN1. Interacts with LRRK2. Interacts with LRP1, leading to endocytosis; this interaction is reduced in the presence of LRPAP1/RAP. Post-translationally, polyubiquitinated. Requires functional TRAF6 and may provoke SQSTM1-dependent degradation by the proteasome. In terms of processing, phosphorylated at various serine and threonine residues in S-P or T-P motifs by proline-directed protein kinases (PDPK1, CDK1, CDK5, GSK3, MAPK) (a few sites per protein in interphase, more in mitosis), and at serine residues in K-X-G-S motifs by MAP/microtubule affinity-regulating kinase (MARK1, MARK2, MARK3, MARK4), causing detachment from microtubules, and their disassembly. Fetal Tau is much more phosphorylated than adult Tau. Phosphorylation at Ser-573 by BRSK1 and BRSK2 in neurons affects ability to bind microtubules and plays a role in neuron polarization. Phosphorylated by PHK. Dephosphorylation at several serine and threonine residues by the serine/threonine phosphatase PPP5C. Phosphorylation at Ser-204 by SGK1 mediates microtubule depolymerization and neurite formation in hippocampal neurons. As to expression, expressed in neurons. The larger forms (isoform tau-A and isoform tau-B) are preferentially expressed in the peripheral nervous system while the other are expressed in the central nervous system. Low amounts of the larger forms are also found in limited areas of the CNS.

It is found in the cytoplasm. The protein localises to the cytosol. Its subcellular location is the cell membrane. The protein resides in the cytoskeleton. It localises to the cell projection. It is found in the axon. The protein localises to the dendrite. Its subcellular location is the secreted. Functionally, promotes microtubule assembly and stability, and might be involved in the establishment and maintenance of neuronal polarity. The C-terminus binds axonal microtubules while the N-terminus binds neural plasma membrane components, suggesting that tau functions as a linker protein between both. Axonal polarity is predetermined by tau localization (in the neuronal cell) in the domain of the cell body defined by the centrosome. The short isoforms allow plasticity of the cytoskeleton whereas the longer isoforms may preferentially play a role in its stabilization. This is Microtubule-associated protein tau from Rattus norvegicus (Rat).